Reading from the N-terminus, the 253-residue chain is 5'-nucleotidase SurE 2 (253 aa).

A divalent metal cation-binding residues include aspartate 8, aspartate 9, serine 39, and asparagine 92.

Belongs to the SurE nucleotidase family. Requires a divalent metal cation as cofactor.

Its subcellular location is the cytoplasm. The catalysed reaction is a ribonucleoside 5'-phosphate + H2O = a ribonucleoside + phosphate. Its function is as follows. Nucleotidase that shows phosphatase activity on nucleoside 5'-monophosphates. This is 5'-nucleotidase SurE 2 from Burkholderia lata (strain ATCC 17760 / DSM 23089 / LMG 22485 / NCIMB 9086 / R18194 / 383).